The chain runs to 309 residues: Peptide methionine sulfoxide reductase MsrA/MsrB (309 aa).

The segment at 1–153 (MIYLAEGCFW…PNGYCHIDIN (153 aa)) is peptide methionine sulfoxide reductase A. Residue Cys8 is part of the active site. Residues 170–293 (ATEIKAKLSA…NSLSITFIPK (124 aa)) enclose the MsrB domain. The Nucleophile role is filled by Cys282.

In the N-terminal section; belongs to the MsrA Met sulfoxide reductase family. The protein in the C-terminal section; belongs to the MsrB Met sulfoxide reductase family.

It carries out the reaction L-methionyl-[protein] + [thioredoxin]-disulfide + H2O = L-methionyl-(S)-S-oxide-[protein] + [thioredoxin]-dithiol. The enzyme catalyses [thioredoxin]-disulfide + L-methionine + H2O = L-methionine (S)-S-oxide + [thioredoxin]-dithiol. The catalysed reaction is L-methionyl-[protein] + [thioredoxin]-disulfide + H2O = L-methionyl-(R)-S-oxide-[protein] + [thioredoxin]-dithiol. Has an important function as a repair enzyme for proteins that have been inactivated by oxidation. Catalyzes the reversible oxidation-reduction of methionine sulfoxide in proteins to methionine. This Streptococcus pyogenes serotype M3 (strain ATCC BAA-595 / MGAS315) protein is Peptide methionine sulfoxide reductase MsrA/MsrB (msrAB).